A 290-amino-acid chain; its full sequence is Short-chain dehydrogenase srdE (290 aa).

Positions 11, 37, 58, and 86 each coordinate NADP(+). Residues Leu-125–Val-145 form a helical membrane-spanning segment. Position 150 (Tyr-150) interacts with NADP(+). Tyr-150 acts as the Proton donor in catalysis. Residue Asn-151 is glycosylated (N-linked (GlcNAc...) asparagine). Positions 154, 183, and 185 each coordinate NADP(+). Catalysis depends on Lys-154, which acts as the Lowers pKa of active site Tyr.

This sequence belongs to the short-chain dehydrogenases/reductases (SDR) family.

It is found in the membrane. Short-chain dehydrogenase; part of the gene cluster that mediates the biosynthesis of sordarial, a salicylic aldehyde structurally related to the phytotoxin pyriculol. The most interesting aspect of this pathway is formation of an aromatic product from the highly reducing polyketide synthase srdA. SrdA synthesizes a reduced polyketide chain from one molecule of acetyl-CoA and five molecules of malonyl-CoA. The polyketide chain is then reductively released as an aldehyde. The oxidoreductases srdC, srdD and srdE then oxidize one of the hydroxy groups to facilitate the intramolecular aldol condensation, followed by dehydration to yield a salicylic aldehyde. This aldehyde can undergo facile reduction by endogenous reductases to yield the alcohol 1-hydroxy-2-hydroxymethyl-3-pent-1,3-dienylbenzene. The flavin-dependent srdI counteract against the propensity of the aldehydes to be reduced under physiological conditions and is responsible for reoxidizing 1-hydroxy-2-hydroxymethyl-3-pent-1,3-dienylbenzene back to the salicylic aldehyde. This salicylic aldehyde is then selectively epoxidized by the cupin-domain-containing oxidoreductase srdB to yield the epoxide, which can be hydrolyzed stereoselectively by the hydrolase srdG to give the final product sordarial. The protein is Short-chain dehydrogenase srdE of Neurospora crassa (strain ATCC 24698 / 74-OR23-1A / CBS 708.71 / DSM 1257 / FGSC 987).